The sequence spans 373 residues: Phospho-N-acetylmuramoyl-pentapeptide-transferase (373 aa).

Transmembrane regions (helical) follow at residues 34-54 (GALF…ISSL), 78-98 (TPTM…LLWA), 100-120 (LANV…AIGF), 141-161 (LGLE…TALS), 181-201 (FMLN…VSAG), 212-232 (GLAI…AYLA), 252-272 (LAVV…FNAP), 275-295 (AIFM…TVAV), 301-321 (IVMA…IIQV), and 350-370 (QVVV…LSTL).

The protein belongs to the glycosyltransferase 4 family. MraY subfamily. Mg(2+) is required as a cofactor.

The protein resides in the cell inner membrane. The enzyme catalyses UDP-N-acetyl-alpha-D-muramoyl-L-alanyl-gamma-D-glutamyl-meso-2,6-diaminopimeloyl-D-alanyl-D-alanine + di-trans,octa-cis-undecaprenyl phosphate = di-trans,octa-cis-undecaprenyl diphospho-N-acetyl-alpha-D-muramoyl-L-alanyl-D-glutamyl-meso-2,6-diaminopimeloyl-D-alanyl-D-alanine + UMP. It functions in the pathway cell wall biogenesis; peptidoglycan biosynthesis. Catalyzes the initial step of the lipid cycle reactions in the biosynthesis of the cell wall peptidoglycan: transfers peptidoglycan precursor phospho-MurNAc-pentapeptide from UDP-MurNAc-pentapeptide onto the lipid carrier undecaprenyl phosphate, yielding undecaprenyl-pyrophosphoryl-MurNAc-pentapeptide, known as lipid I. The chain is Phospho-N-acetylmuramoyl-pentapeptide-transferase from Rhizobium rhizogenes (strain K84 / ATCC BAA-868) (Agrobacterium radiobacter).